A 315-amino-acid polypeptide reads, in one-letter code: MAQFQIECVESNTEESRNHYSKFILEPLERGQGTTVGNALRRVLLSNLEGTAVTAVRIAGVSHEFATVPGVREDVLEIIMRMKEVILKSYSSQAQIGRLLVNGPTTITASHFDLPSEVEVIDPTQYVATIAEGGKLEMEFRIERGKGYRTVERGREEATSLDFLQIDSIFMPVRKVNYSVEEVRADGSIPKDRLLLEVWTNGSISPQEALSSAAGILVDLFNPLKDISLEPTDTNSDIPDDPTAQIPIEELQLSVRAYNCLKRAQVNSVADLLDYTQEDLLEIKNFGQKSAEEVVEALQRRLGITLPQERSSKHS.

Residues 1–228 (MAQFQIECVE…DLFNPLKDIS (228 aa)) form an alpha N-terminal domain (alpha-NTD) region. Residues 238-315 (IPDDPTAQIP…LPQERSSKHS (78 aa)) form an alpha C-terminal domain (alpha-CTD) region.

The protein belongs to the RNA polymerase alpha chain family. As to quaternary structure, in cyanobacteria the RNAP catalytic core is composed of 2 alpha, 1 beta, 1 beta', 1 gamma and 1 omega subunit. When a sigma factor is associated with the core the holoenzyme is formed, which can initiate transcription.

The catalysed reaction is RNA(n) + a ribonucleoside 5'-triphosphate = RNA(n+1) + diphosphate. In terms of biological role, DNA-dependent RNA polymerase catalyzes the transcription of DNA into RNA using the four ribonucleoside triphosphates as substrates. This chain is DNA-directed RNA polymerase subunit alpha, found in Trichormus variabilis (strain ATCC 29413 / PCC 7937) (Anabaena variabilis).